The chain runs to 460 residues: Bifunctional protein GlmU (460 aa).

Residues 1 to 232 (MALNVVILAA…AIEVEGANNR (232 aa)) are pyrophosphorylase. Residues 8 to 11 (LAAG), K22, Q73, 78 to 79 (GT), 100 to 102 (YGD), G137, E157, N172, and N230 contribute to the UDP-N-acetyl-alpha-D-glucosamine site. D102 contributes to the Mg(2+) binding site. N230 contributes to the Mg(2+) binding site. Positions 233-253 (VQLAQLERAYQAREAEKLMLA) are linker. The segment at 254–460 (GANLRDPSRI…GWQRPVKIKK (207 aa)) is N-acetyltransferase. UDP-N-acetyl-alpha-D-glucosamine-binding residues include R336 and K354. H366 serves as the catalytic Proton acceptor. Residues Y369 and N380 each contribute to the UDP-N-acetyl-alpha-D-glucosamine site. Residues A383, 389-390 (NY), S408, A426, and R443 contribute to the acetyl-CoA site.

In the N-terminal section; belongs to the N-acetylglucosamine-1-phosphate uridyltransferase family. This sequence in the C-terminal section; belongs to the transferase hexapeptide repeat family. In terms of assembly, homotrimer. Mg(2+) serves as cofactor.

It localises to the cytoplasm. The catalysed reaction is alpha-D-glucosamine 1-phosphate + acetyl-CoA = N-acetyl-alpha-D-glucosamine 1-phosphate + CoA + H(+). It catalyses the reaction N-acetyl-alpha-D-glucosamine 1-phosphate + UTP + H(+) = UDP-N-acetyl-alpha-D-glucosamine + diphosphate. Its pathway is nucleotide-sugar biosynthesis; UDP-N-acetyl-alpha-D-glucosamine biosynthesis; N-acetyl-alpha-D-glucosamine 1-phosphate from alpha-D-glucosamine 6-phosphate (route II): step 2/2. It functions in the pathway nucleotide-sugar biosynthesis; UDP-N-acetyl-alpha-D-glucosamine biosynthesis; UDP-N-acetyl-alpha-D-glucosamine from N-acetyl-alpha-D-glucosamine 1-phosphate: step 1/1. The protein operates within bacterial outer membrane biogenesis; LPS lipid A biosynthesis. In terms of biological role, catalyzes the last two sequential reactions in the de novo biosynthetic pathway for UDP-N-acetylglucosamine (UDP-GlcNAc). The C-terminal domain catalyzes the transfer of acetyl group from acetyl coenzyme A to glucosamine-1-phosphate (GlcN-1-P) to produce N-acetylglucosamine-1-phosphate (GlcNAc-1-P), which is converted into UDP-GlcNAc by the transfer of uridine 5-monophosphate (from uridine 5-triphosphate), a reaction catalyzed by the N-terminal domain. In Shewanella baltica (strain OS155 / ATCC BAA-1091), this protein is Bifunctional protein GlmU.